A 335-amino-acid polypeptide reads, in one-letter code: uncharacterized protein (335 aa).

Positions 1-21 (MDKKARAHTVIVCLVGALSLA) are cleaved as a signal peptide. Residue Cys22 is the site of N-palmitoyl cysteine attachment. Cys22 is lipidated: S-diacylglycerol cysteine.

It is found in the cell membrane. This is an uncharacterized protein from Treponema pallidum (strain Nichols).